Reading from the N-terminus, the 179-residue chain is Large ribosomal subunit protein uL6 (179 aa).

It belongs to the universal ribosomal protein uL6 family. As to quaternary structure, part of the 50S ribosomal subunit.

This protein binds to the 23S rRNA, and is important in its secondary structure. It is located near the subunit interface in the base of the L7/L12 stalk, and near the tRNA binding site of the peptidyltransferase center. This is Large ribosomal subunit protein uL6 from Syntrophobacter fumaroxidans (strain DSM 10017 / MPOB).